The chain runs to 69 residues: Putative defensin-like protein 312 (69 aa).

The N-terminal stretch at 1–19 (MSCFSFLVYFLLFIVTKMS) is a signal peptide. Cysteine 45 and cysteine 57 form a disulfide bridge.

This sequence belongs to the DEFL family.

It localises to the secreted. The chain is Putative defensin-like protein 312 from Arabidopsis thaliana (Mouse-ear cress).